Reading from the N-terminus, the 139-residue chain is Putative nickel-responsive regulator (139 aa).

Residues histidine 79, histidine 90, histidine 92, and cysteine 98 each contribute to the Ni(2+) site.

This sequence belongs to the transcriptional regulatory CopG/NikR family. Ni(2+) serves as cofactor.

In terms of biological role, transcriptional regulator. In Solidesulfovibrio magneticus (strain ATCC 700980 / DSM 13731 / RS-1) (Desulfovibrio magneticus), this protein is Putative nickel-responsive regulator.